The sequence spans 115 residues: Phosphoribosyl-AMP cyclohydrolase (115 aa).

Asp80 contributes to the Mg(2+) binding site. Cys81 is a binding site for Zn(2+). Mg(2+)-binding residues include Asp82 and Asp84. 2 residues coordinate Zn(2+): Cys97 and Cys104.

Belongs to the PRA-CH family. In terms of assembly, homodimer. It depends on Mg(2+) as a cofactor. Zn(2+) is required as a cofactor.

The protein resides in the cytoplasm. It carries out the reaction 1-(5-phospho-beta-D-ribosyl)-5'-AMP + H2O = 1-(5-phospho-beta-D-ribosyl)-5-[(5-phospho-beta-D-ribosylamino)methylideneamino]imidazole-4-carboxamide. It functions in the pathway amino-acid biosynthesis; L-histidine biosynthesis; L-histidine from 5-phospho-alpha-D-ribose 1-diphosphate: step 3/9. Its function is as follows. Catalyzes the hydrolysis of the adenine ring of phosphoribosyl-AMP. In Mycobacterium bovis (strain ATCC BAA-935 / AF2122/97), this protein is Phosphoribosyl-AMP cyclohydrolase.